The chain runs to 80 residues: Phosphoribosylformylglycinamidine synthase subunit PurS (80 aa).

It belongs to the PurS family. Homodimer. Part of the FGAM synthase complex composed of 1 PurL, 1 PurQ and 2 PurS subunits.

The protein localises to the cytoplasm. The catalysed reaction is N(2)-formyl-N(1)-(5-phospho-beta-D-ribosyl)glycinamide + L-glutamine + ATP + H2O = 2-formamido-N(1)-(5-O-phospho-beta-D-ribosyl)acetamidine + L-glutamate + ADP + phosphate + H(+). It participates in purine metabolism; IMP biosynthesis via de novo pathway; 5-amino-1-(5-phospho-D-ribosyl)imidazole from N(2)-formyl-N(1)-(5-phospho-D-ribosyl)glycinamide: step 1/2. Its function is as follows. Part of the phosphoribosylformylglycinamidine synthase complex involved in the purines biosynthetic pathway. Catalyzes the ATP-dependent conversion of formylglycinamide ribonucleotide (FGAR) and glutamine to yield formylglycinamidine ribonucleotide (FGAM) and glutamate. The FGAM synthase complex is composed of three subunits. PurQ produces an ammonia molecule by converting glutamine to glutamate. PurL transfers the ammonia molecule to FGAR to form FGAM in an ATP-dependent manner. PurS interacts with PurQ and PurL and is thought to assist in the transfer of the ammonia molecule from PurQ to PurL. The chain is Phosphoribosylformylglycinamidine synthase subunit PurS from Archaeoglobus fulgidus (strain ATCC 49558 / DSM 4304 / JCM 9628 / NBRC 100126 / VC-16).